Here is a 160-residue protein sequence, read N- to C-terminus: MANKEHRVKQSLGLLEVCGLALAISCADIMAKSASITLLALEKTNGSGWMVIKITGDVASVQAAITTGAHFAEQWNGLVAHKVIARPGEGILLAETPSPSVIEPEPEASEIADVVSEAPAEEAPQESELVSCNLCLDPKCPRQKGEPRTLCIHSGKRGEA.

The 86-residue stretch at 11 to 96 (SLGLLEVCGL…PGEGILLAET (86 aa)) folds into the BMC domain.

Belongs to the bacterial microcompartments protein family. Interacts with shell proteins PduA and PduP and assembly protein PduM. Fe cation serves as cofactor.

Its subcellular location is the bacterial microcompartment. It functions in the pathway polyol metabolism; 1,2-propanediol degradation. In terms of biological role, a minor shell protein of the bacterial microcompartment (BMC) dedicated to 1,2-propanediol (1,2-PD) degradation. The isolated BMC shell component protein ratio for J:A:B':B:K:T:U is approximately 15:10:7:6:1:1:2. Not required for structural integrity of BMCs nor to mitigate propionaldehyde toxicity, it might be involved in spatial organization of BMCs. Its function is as follows. The 1,2-PD-specific bacterial microcompartment (BMC) concentrates low levels of 1,2-PD catabolic enzymes, concentrates volatile reaction intermediates thus enhancing pathway flux and keeps the level of toxic, mutagenic propionaldehyde low. This Salmonella typhimurium (strain LT2 / SGSC1412 / ATCC 700720) protein is Bacterial microcompartment shell protein PduK.